The following is a 699-amino-acid chain: Extracellular matrix protein 2 (699 aa).

A signal peptide spans 1–20; that stretch reads MKIAVLFCFFLLIIFQTDFG. Residues 101-158 form the VWFC domain; that stretch reads GHCLVKGITMYNKAVWSPEPCTTCLCSDGRVLCDETMCHPQRCPQTVIPEGECCPVCS. Residues 176-186 are compositionally biased toward basic and acidic residues; that stretch reads EFSGDSSEQRE. The interval 176–316 is disordered; that stretch reads EFSGDSSEQR…PAPPRGTLRL (141 aa). Positions 212-224 are enriched in acidic residues; that stretch reads QSEEDEEVKEEDT. Residues 243–260 are compositionally biased toward basic and acidic residues; that stretch reads GDSRGGDRKQRPGEERRL. Positions 270-291 are enriched in acidic residues; that stretch reads EEEEDEEEEGEEGEEDEEDEED. Residues 294–296 carry the Cell attachment site motif; it reads RGD. Positions 307–344 constitute an LRRNT domain; sequence PAPPRGTLRLPSGCSLSYRTISCINAMLTQIPPLTAPQ. 13 LRR repeats span residues 368–388, 394–415, 416–436, 439–459, 465–484, 486–507, 510–530, 536–557, 558–578, 582–602, 609–630, 632–653, and 661–684; these read NLER…GPKA, KLMR…LPST, LEEL…SLSD, QLVT…NPLA, SLAY…QGLP, SIEE…CFNH, KINV…APLA, NLES…LPKS, LLHL…VFGH, GLEY…DRVS, SLRE…IQEM, ALHF…EICN, and NLEH…TFSC. N378 is a glycosylation site (N-linked (GlcNAc...) asparagine). N449 carries N-linked (GlcNAc...) asparagine glycosylation. An N-linked (GlcNAc...) asparagine glycan is attached at N506.

The protein belongs to the small leucine-rich proteoglycan (SLRP) family. SLRP class I subfamily. Interacts with numerous extracellular matrix proteins. Interacts with MSL1 and RASSF1. Expressed predominantly in adipose tissue as well as female-specific organs such as mammary gland, ovary, and uterus.

Its subcellular location is the secreted. The protein resides in the extracellular space. The protein localises to the extracellular matrix. Functionally, promotes matrix assembly and cell adhesiveness. The polypeptide is Extracellular matrix protein 2 (ECM2) (Homo sapiens (Human)).